A 111-amino-acid chain; its full sequence is Small ribosomal subunit protein bS18 (111 aa).

Positions 1–32 (MDLENTENVENNNNNEEEVKAKGERKAHFNKE) are disordered. Over residues 17 to 32 (EEVKAKGERKAHFNKE) the composition is skewed to basic and acidic residues.

The protein belongs to the bacterial ribosomal protein bS18 family. Part of the 30S ribosomal subunit. Forms a tight heterodimer with protein bS6.

Its function is as follows. Binds as a heterodimer with protein bS6 to the central domain of the 16S rRNA, where it helps stabilize the platform of the 30S subunit. This chain is Small ribosomal subunit protein bS18, found in Brachyspira hyodysenteriae (strain ATCC 49526 / WA1).